Here is a 477-residue protein sequence, read N- to C-terminus: Lactate utilization protein B (477 aa).

4Fe-4S ferredoxin-type domains are found at residues 304–334 (GTQF…GHSY) and 353–382 (YDTY…LHDL). Cys-313, Cys-316, Cys-319, Cys-323, Cys-366, Cys-369, and Cys-373 together coordinate [4Fe-4S] cluster. The tract at residues 443 to 463 (GPKPLQAWTNSRDFPMPDDEN) is disordered.

Belongs to the LutB/YkgF family.

In terms of biological role, is involved in L-lactate degradation and allows cells to grow with lactate as the sole carbon source. Has probably a role as an electron transporter during oxidation of L-lactate. This chain is Lactate utilization protein B, found in Macrococcus caseolyticus (strain JCSC5402) (Macrococcoides caseolyticum).